Here is an 813-residue protein sequence, read N- to C-terminus: Envelope glycoprotein H (813 aa).

The signal sequence occupies residues 1–18 (MGLPGSIVFLIMIHAFCA). At 19 to 769 (KKTPTNTLPS…ESERVTIISA (751 aa)) the chain is on the virion surface side. Residues asparagine 62 and asparagine 116 are each glycosylated (N-linked (GlcNAc...) asparagine; by host). The disordered stretch occupies residues 135-159 (DRSGLKLDDKDDAQPTGTNPPTELK). Residues 137–147 (SGLKLDDKDDA) are compositionally biased toward basic and acidic residues. Positions 212-273 (DGAEVIMKIG…FTRRPYLIYL (62 aa)) are interaction with gL. N-linked (GlcNAc...) asparagine; by host glycosylation is found at asparagine 247, asparagine 279, asparagine 410, asparagine 434, asparagine 469, asparagine 576, asparagine 727, and asparagine 750. Residues 770–790 (TYVATATAGASIAISIAIITV) form a helical membrane-spanning segment. At 791 to 813 (RMIINNFRYNYHRYKKLSLYDDL) the chain is on the intravirion side.

Belongs to the herpesviridae glycoprotein H family. Interacts with glycoprotein L (gL); this interaction is necessary for the correct processing and cell surface expression of gH. The heterodimer gH/gL seems to interact with gB trimers during fusion. In terms of processing, N-glycosylated, O-glycosylated, and sialylated.

It is found in the virion membrane. The protein localises to the host cell membrane. Its subcellular location is the host endosome membrane. Functionally, the heterodimer glycoprotein H-glycoprotein L is required for the fusion of viral and plasma membranes leading to virus entry into the host cell. Following initial binding to host receptor, membrane fusion is mediated by the fusion machinery composed of gB and the heterodimer gH/gL. May also be involved in the fusion between the virion envelope and the outer nuclear membrane during virion morphogenesis. This Gallus gallus (Chicken) protein is Envelope glycoprotein H.